The chain runs to 257 residues: Flap endonuclease Xni (257 aa).

Mg(2+) is bound at residue Asp109. Residues 165–255 (LKPEQLADYW…FNLQDIRYEK (91 aa)) enclose the 5'-3' exonuclease domain. K(+) contacts are provided by Leu176, Ala177, Ile187, and Ile190. Positions 189-194 (GIGPKA) are interaction with DNA.

Belongs to the Xni family. Mg(2+) serves as cofactor. It depends on K(+) as a cofactor.

Its function is as follows. Has flap endonuclease activity. During DNA replication, flap endonucleases cleave the 5'-overhanging flap structure that is generated by displacement synthesis when DNA polymerase encounters the 5'-end of a downstream Okazaki fragment. In Aliivibrio salmonicida (strain LFI1238) (Vibrio salmonicida (strain LFI1238)), this protein is Flap endonuclease Xni.